Reading from the N-terminus, the 483-residue chain is Homoserine O-acetyltransferase (483 aa).

The region spanning 47–346 is the AB hydrolase-1 domain; sequence NVILICHALT…HFGHDAFLLE (300 aa). Ser-152 serves as the catalytic Nucleophile. Arg-221 is a substrate binding site. Active-site residues include Asp-307 and His-340. A substrate-binding site is contributed by Asp-341. 2 consecutive CBS domains span residues 367–423 and 428–483; these read MSED…KISS and LSRD…KGTK.

The protein belongs to the AB hydrolase superfamily. MetX family. In terms of assembly, homodimer.

The protein localises to the cytoplasm. It catalyses the reaction L-homoserine + acetyl-CoA = O-acetyl-L-homoserine + CoA. It participates in amino-acid biosynthesis; L-methionine biosynthesis via de novo pathway; O-acetyl-L-homoserine from L-homoserine: step 1/1. Its function is as follows. Transfers an acetyl group from acetyl-CoA to L-homoserine, forming acetyl-L-homoserine. This is Homoserine O-acetyltransferase from Methanohalophilus mahii (strain ATCC 35705 / DSM 5219 / SLP).